Consider the following 127-residue polypeptide: Small ribosomal subunit protein eS8 (127 aa).

This sequence belongs to the eukaryotic ribosomal protein eS8 family. Part of the 30S ribosomal subunit.

This chain is Small ribosomal subunit protein eS8 (rps8e), found in Pyrococcus horikoshii (strain ATCC 700860 / DSM 12428 / JCM 9974 / NBRC 100139 / OT-3).